The sequence spans 371 residues: Mitogen-activated protein kinase homolog NTF6 (371 aa).

The 287-residue stretch at 38-324 (IPPIQPVGRG…VEDALNHPFL (287 aa)) folds into the Protein kinase domain. ATP is bound by residues 44 to 52 (VGRGAYGMV) and lysine 67. Aspartate 164 (proton acceptor) is an active-site residue. Threonine 196 carries the phosphothreonine modification. The short motif at 196-198 (TEY) is the TXY element. Tyrosine 198 bears the Phosphotyrosine mark.

It belongs to the protein kinase superfamily. CMGC Ser/Thr protein kinase family. MAP kinase subfamily. Mg(2+) is required as a cofactor. Post-translationally, dually phosphorylated on Thr-196 and Tyr-198, which activates the enzyme. Very low autophosphorylation, although dramatically increased when Mn(2+) is added to the reaction instead of Mg(2+).

The enzyme catalyses L-seryl-[protein] + ATP = O-phospho-L-seryl-[protein] + ADP + H(+). It catalyses the reaction L-threonyl-[protein] + ATP = O-phospho-L-threonyl-[protein] + ADP + H(+). Activated by tyrosine and threonine phosphorylation. The chain is Mitogen-activated protein kinase homolog NTF6 (NTF6) from Nicotiana tabacum (Common tobacco).